Reading from the N-terminus, the 297-residue chain is Protoheme IX farnesyltransferase (297 aa).

Transmembrane regions (helical) follow at residues 23–43 (VTQLAVFCAVIGMFLAAPGMP), 49–69 (VFGTLGIWLLAAAAFAINCLI), 93–113 (IQVLSLSGLLGGAGMLVLYHL), 117–137 (LTMWLTFATFVGYAIIYTVIL), 144–164 (NIVIGGLSGAMPPALGWAAVA), 171–191 (AWVLVLIIFIWTPPHFWALAL), 215–235 (RLHILLYSFALLATTLLPYAI), 238–258 (SGALYLASALALGGMFVWYAW), and 275–295 (FSILYLALLFGALLIDHWVGL).

It belongs to the UbiA prenyltransferase family. Protoheme IX farnesyltransferase subfamily.

The protein localises to the cell inner membrane. The catalysed reaction is heme b + (2E,6E)-farnesyl diphosphate + H2O = Fe(II)-heme o + diphosphate. The protein operates within porphyrin-containing compound metabolism; heme O biosynthesis; heme O from protoheme: step 1/1. Its function is as follows. Converts heme B (protoheme IX) to heme O by substitution of the vinyl group on carbon 2 of heme B porphyrin ring with a hydroxyethyl farnesyl side group. The protein is Protoheme IX farnesyltransferase of Bordetella bronchiseptica (strain ATCC BAA-588 / NCTC 13252 / RB50) (Alcaligenes bronchisepticus).